The following is a 40-amino-acid chain: Photosystem II reaction center protein J (40 aa).

A helical transmembrane segment spans residues 8-28 (IPLWLIGTVTGIIVIGLLGIF).

Belongs to the PsbJ family. PSII is composed of 1 copy each of membrane proteins PsbA, PsbB, PsbC, PsbD, PsbE, PsbF, PsbH, PsbI, PsbJ, PsbK, PsbL, PsbM, PsbT, PsbX, PsbY, PsbZ, Psb30/Ycf12, at least 3 peripheral proteins of the oxygen-evolving complex and a large number of cofactors. It forms dimeric complexes.

It is found in the plastid. It localises to the chloroplast thylakoid membrane. Its function is as follows. One of the components of the core complex of photosystem II (PSII). PSII is a light-driven water:plastoquinone oxidoreductase that uses light energy to abstract electrons from H(2)O, generating O(2) and a proton gradient subsequently used for ATP formation. It consists of a core antenna complex that captures photons, and an electron transfer chain that converts photonic excitation into a charge separation. This is Photosystem II reaction center protein J from Pinus koraiensis (Korean pine).